We begin with the raw amino-acid sequence, 253 residues long: U2 small nuclear ribonucleoprotein A' (253 aa).

LRR repeat units lie at residues 19 to 40 (KDRELDLRGHKIPTIENLGIAK), 41 to 62 (DQDAIDFTDNDISSLGNFPFFP), 63 to 84 (RLHTLLLARNRVKHIQPTIAST), and 87 to 108 (NLTTLVLTANNMAELADLDPLR). An LRRCT domain is found at 121-159 (NPVTRKEHYRYWVIWRIPSVRFLDYQKVKDAERAKAKEL). A disordered region spans residues 228–253 (ELNEGRIPGGALDAGEDSEDENQMQT). A compositionally biased stretch (acidic residues) spans 241 to 253 (AGEDSEDENQMQT).

Belongs to the U2 small nuclear ribonucleoprotein A family. In terms of assembly, associated with the spliceosome.

It is found in the nucleus. In terms of biological role, involved in pre-mRNA splicing. The protein is U2 small nuclear ribonucleoprotein A' (lea1) of Aspergillus fumigatus (strain ATCC MYA-4609 / CBS 101355 / FGSC A1100 / Af293) (Neosartorya fumigata).